Here is a 130-residue protein sequence, read N- to C-terminus: Ribonuclease P protein component (130 aa).

The protein belongs to the RnpA family. As to quaternary structure, consists of a catalytic RNA component (M1 or rnpB) and a protein subunit.

It carries out the reaction Endonucleolytic cleavage of RNA, removing 5'-extranucleotides from tRNA precursor.. Functionally, RNaseP catalyzes the removal of the 5'-leader sequence from pre-tRNA to produce the mature 5'-terminus. It can also cleave other RNA substrates such as 4.5S RNA. The protein component plays an auxiliary but essential role in vivo by binding to the 5'-leader sequence and broadening the substrate specificity of the ribozyme. The protein is Ribonuclease P protein component of Azotobacter vinelandii (strain DJ / ATCC BAA-1303).